A 518-amino-acid chain; its full sequence is T-box transcription factor TBX5 (518 aa).

Positions 1–46 are disordered; it reads MADTDEGFGLARTPLEPDSKDRSCDSKPESALGAPSKSPSSPQAAF. Over residues 15–28 the composition is skewed to basic and acidic residues; it reads LEPDSKDRSCDSKP. Low complexity predominate over residues 34 to 45; the sequence is APSKSPSSPQAA. Positions 58 to 238 form a DNA-binding region, T-box; the sequence is LHERELWLKF…NNPFAKGFRG (181 aa). Disordered regions lie at residues 254-307 and 330-352; these read EYPV…LLPP and ECSS…EEDT. The segment covering 269 to 301 has biased composition (polar residues); sequence SNHSPFSSETRALSTSSNLGSQYQCENGVSGPS. An N6-acetyllysine modification is found at Lys-339.

In terms of assembly, monomer. Homodimer (via the T-box); binds DNA as homodimer. Interacts (via the T-box) with NKX2-5 (via the homeobox); this complex binds DNA. Interacts with GATA4. Interacts with KAT2A and KAT2B. Post-translationally, acetylation at Lys-339 by KAT2A and KAT2B promotes nuclear retention.

The protein localises to the nucleus. It localises to the cytoplasm. Its function is as follows. DNA-binding protein that regulates the transcription of several genes and is involved in heart development and limb pattern formation. Binds to the core DNA motif of NPPA promoter. The protein is T-box transcription factor TBX5 (Tbx5) of Mus musculus (Mouse).